A 734-amino-acid chain; its full sequence is Terpene cyclase/mutase ntnI (734 aa).

Residues 1-12 (MQSHIGQWTSTA) show a composition bias toward polar residues. Positions 1-26 (MQSHIGQWTSTAKGHLSRDENGDEKT) are disordered. The span at 16–26 (LSRDENGDEKT) shows a compositional bias: basic and acidic residues. PFTB repeat units follow at residues 130-172 (AIEI…RLLG), 493-534 (LHNA…SGKT), 570-610 (RTRG…ALAG), and 619-668 (SRKG…GLMH).

It belongs to the terpene cyclase/mutase family.

It participates in secondary metabolite biosynthesis; terpenoid biosynthesis. Functionally, terpene cyclase/mutase; part of the gene cluster that mediates the biosynthesis of the meroterpenoids nectripenoids A and B, as well as cochliquninone D and isocochliquninone E. The pathway probably begins with the HR-PKS ntnH that catalyzes two chain-extension steps to form a reduced triketide, which then primes the SAT domain in the NR-PKS ntnG to initiate three more cycles of extension to give a linear hexaketide corresponding to the polyketide part of nectripenoids. The FAD-dependent monooxygenase ntnJ then performs an oxidative decarboxylation at C11 of the ntnH/ntnG product, via an electrophilic aromatic hydroxylation with concomitant ipso-decarboxylation. The membrane-bound polyprenyl transferase ntnF then introduces a farnesyl group before the FAD-dependent monooxygenase ntnK functions as the first epoxidase on terminal C12'-C13' olefin, followed by a second epoxidation on C7'-C8' catalyzed by ntnA. The terpene cyclase/mutase ntnI then initiates the sequential tricyclic ring formation through protonation of the terminal epoxide and catalyzes the regioselective and stereoselective 6/6/6-tricyclic ring formation. The cytochrome P450 monooxygenase ntnM may then hydroxylate C1'. This chain is Terpene cyclase/mutase ntnI, found in Nectria sp.